The chain runs to 262 residues: Protein NEGATIVE GRAVITROPIC RESPONSE OF ROOTS (262 aa).

Positions 1 to 40 (MKFFNWMQNKLGGKQENRKSNTSTSTTYAKPEPREEFSDW) are disordered. Residues 43–49 (SLLAIGT) carry the IGT motif motif.

Belongs to the LAZY family.

Functionally, involved in the control of root gravitropism. This chain is Protein NEGATIVE GRAVITROPIC RESPONSE OF ROOTS, found in Medicago truncatula (Barrel medic).